Reading from the N-terminus, the 217-residue chain is KH domain-containing protein 3 (217 aa).

Residues 1 to 40 (MDAPRRFPTLVQLMQPKAMPVEVLGHLPKRFSWFHSEFLK) are involved in RNA binding. The region spanning 40-103 (KNPKVVRLEV…SYQEDTIKMI (64 aa)) is the KH; atypical domain. The disordered stretch occupies residues 129-217 (QKAETQRSSI…EDARDPVTRL (89 aa)). Positions 138–155 (IEVREAGTQRSVEVREAG) are enriched in basic and acidic residues. Residues Thr-145 and Thr-156 each carry the phosphothreonine; by ATM modification. Polar residues-rich tracts occupy residues 156 to 170 (TQRS…TQGS) and 177 to 194 (AGTQ…TQRS). At Ser-182 the chain carries Phosphoserine. Residues 205–217 (RFREDARDPVTRL) show a composition bias toward basic and acidic residues.

This sequence belongs to the KHDC1 family. As to quaternary structure, component of the subcortical maternal complex (SCMC), at least composed of NLRP5, KHDC3L, OOEP, and TLE6 isoform 1. Within the complex, interacts with NLRP5, KHDC3L and TLE6 isoform 1. The SCMC may facilitate translocation of its components between the nuclear and cytoplasmic compartments. Forms a scaffold complex with OOEP/FLOPED, and interacts with BLM and TRIM25 at DNA replication forks. Interacts with PARP1; the interaction is increased following the formation of DNA double-strand breaks. Interacts with NUMA1. Expression appears to be maximal in germinal vesicle oocytes, it tails off through metaphase II oocytes and is undetectable following the completion of the oocyte to embryo transition.

It localises to the cytoplasm. The protein localises to the cell cortex. It is found in the nucleus. The protein resides in the mitochondrion. Its subcellular location is the cytoskeleton. It localises to the microtubule organizing center. The protein localises to the centrosome. It is found in the chromosome. In terms of biological role, component of the subcortical maternal complex (SCMC), a multiprotein complex that plays a key role in early embryonic development. The SCMC complex is a structural constituent of cytoplasmic lattices, which consist in fibrous structures found in the cytoplasm of oocytes and preimplantation embryos. They are required to store maternal proteins critical for embryonic development, such as proteins that control epigenetic reprogramming of the preimplantation embryo, and prevent their degradation or activation. KHDC3 ensures proper spindle assembly by regulating the localization of AURKA via RHOA signaling and of PLK1 via a RHOA-independent process. Required for the localization of MAD2L1 to kinetochores to enable spindle assembly checkpoint function. As part of the OOEP-KHDC3 scaffold, recruits BLM and TRIM25 to DNA replication forks, thereby promoting the ubiquitination of BLM by TRIM25, enhancing BLM retainment at replication forks and therefore promoting stalled replication fork restart. Regulates homologous recombination-mediated DNA repair via recruitment of RAD51 to sites of DNA double-strand breaks, and sustainment of PARP1 activity, which in turn modulates downstream ATM or ATR activation. Activation of ATM or ATR in response to DNA double-strand breaks may be cell-type specific. Its role in DNA double-strand break repair is independent of its role in restarting stalled replication forks. Promotes neural stem cell neurogenesis and neuronal differentiation in the hippocampus. May regulate normal development of learning, memory and anxiety. Capable of binding RNA. The chain is KH domain-containing protein 3 from Homo sapiens (Human).